We begin with the raw amino-acid sequence, 184 residues long: GTP cyclohydrolase 1 (184 aa).

The Zn(2+) site is built by cysteine 75, histidine 78, and cysteine 146.

Belongs to the GTP cyclohydrolase I family. Toroid-shaped homodecamer, composed of two pentamers of five dimers.

It catalyses the reaction GTP + H2O = 7,8-dihydroneopterin 3'-triphosphate + formate + H(+). Its pathway is cofactor biosynthesis; 7,8-dihydroneopterin triphosphate biosynthesis; 7,8-dihydroneopterin triphosphate from GTP: step 1/1. The chain is GTP cyclohydrolase 1 from Chromohalobacter salexigens (strain ATCC BAA-138 / DSM 3043 / CIP 106854 / NCIMB 13768 / 1H11).